The following is a 79-amino-acid chain: MDVKETILNIIEELFMEDVSEMMDEDLFDAGVLDSMGTVELIVELESRFNITVPVSEFGREDWNTANKIISGVVELMHA.

The Carrier domain maps to 1–77; it reads MDVKETILNI…KIISGVVELM (77 aa). At Ser35 the chain carries O-(pantetheine 4'-phosphoryl)serine.

It belongs to the DltC family. Post-translationally, 4'-phosphopantetheine is transferred from CoA to a specific serine of apo-DCP.

The protein resides in the cytoplasm. Its pathway is cell wall biogenesis; lipoteichoic acid biosynthesis. In terms of biological role, carrier protein involved in the D-alanylation of lipoteichoic acid (LTA). The loading of thioester-linked D-alanine onto DltC is catalyzed by D-alanine--D-alanyl carrier protein ligase DltA. The DltC-carried D-alanyl group is further transferred to cell membrane phosphatidylglycerol (PG) by forming an ester bond, probably catalyzed by DltD. D-alanylation of LTA plays an important role in modulating the properties of the cell wall in Gram-positive bacteria, influencing the net charge of the cell wall. This Streptococcus suis (strain 05ZYH33) protein is D-alanyl carrier protein.